Here is a 401-residue protein sequence, read N- to C-terminus: Chorismate synthase (401 aa).

Residues R40 and R46 each coordinate NADP(+). Residues 135 to 137, 256 to 257, G302, 317 to 321, and R343 each bind FMN; these read RAS, QA, and KPISS.

The protein belongs to the chorismate synthase family. In terms of assembly, homotetramer. It depends on FMNH2 as a cofactor.

It carries out the reaction 5-O-(1-carboxyvinyl)-3-phosphoshikimate = chorismate + phosphate. Its pathway is metabolic intermediate biosynthesis; chorismate biosynthesis; chorismate from D-erythrose 4-phosphate and phosphoenolpyruvate: step 7/7. Its function is as follows. Catalyzes the anti-1,4-elimination of the C-3 phosphate and the C-6 proR hydrogen from 5-enolpyruvylshikimate-3-phosphate (EPSP) to yield chorismate, which is the branch point compound that serves as the starting substrate for the three terminal pathways of aromatic amino acid biosynthesis. This reaction introduces a second double bond into the aromatic ring system. This Saccharopolyspora erythraea (strain ATCC 11635 / DSM 40517 / JCM 4748 / NBRC 13426 / NCIMB 8594 / NRRL 2338) protein is Chorismate synthase.